A 579-amino-acid polypeptide reads, in one-letter code: Tricyclene synthase 0e23, chloroplastic (579 aa).

The transit peptide at 1–66 (MAFCISYLGA…ALCLNAHSTS (66 aa)) directs the protein to the chloroplast. N-linked (GlcNAc...) asparagine glycans are attached at residues N27, N204, and N317. D336 and D340 together coordinate Mg(2+). The DDXXD motif motif lies at 336-340 (DDIFD). 2 N-linked (GlcNAc...) asparagine glycosylation sites follow: N382 and N463. Mg(2+)-binding residues include N480 and E488. N507 is a glycosylation site (N-linked (GlcNAc...) asparagine).

It belongs to the terpene synthase family. Tpsg subfamily. Mg(2+) serves as cofactor. The cofactor is Mn(2+). As to expression, accumulates in flowers; mostly expressed in both upper and lower petal lobes, and, to a lower extent, in tube and stamens.

Its subcellular location is the plastid. It is found in the chloroplast stroma. It carries out the reaction (2E)-geranyl diphosphate = tricyclene + diphosphate. The catalysed reaction is (2E)-geranyl diphosphate = (E)-beta-ocimene + diphosphate. It participates in secondary metabolite biosynthesis; terpenoid biosynthesis. In terms of biological role, contributes to floral scent emission. The sequence is that of Tricyclene synthase 0e23, chloroplastic (0e23) from Antirrhinum majus (Garden snapdragon).